Reading from the N-terminus, the 1215-residue chain is Chromosome segregation protein sudA (1215 aa).

32-39 contacts ATP; it reads GRNGSGKS. The stretch at 177–522 forms a coiled coil; the sequence is KIMHETNSKR…LSQMMDHNTS (346 aa). The segment at 313–332 is disordered; the sequence is SDNQAAAQESKARHDESLKA. In terms of domain architecture, SMC hinge spans 538-650; it reads EGVYGTLAEL…PNLQVASQYA (113 aa). A disordered region spans residues 654-676; the sequence is GVNATTPEGDRSDKRGALTGGFH. Residues 684–1091 are a coiled coil; it reads DAVKNLAKWR…EEAKHSVENY (408 aa).

Belongs to the SMC family. SMC3 subfamily.

It is found in the nucleus. In terms of biological role, involved in chromosome segregation in mitosis. This chain is Chromosome segregation protein sudA (sudA), found in Emericella nidulans (strain FGSC A4 / ATCC 38163 / CBS 112.46 / NRRL 194 / M139) (Aspergillus nidulans).